The primary structure comprises 337 residues: 2-ketoarginine methyltransferase (337 aa).

The protein belongs to the 2-ketoarginine methyltransferase family.

It catalyses the reaction 5-guanidino-2-oxopentanoate + S-adenosyl-L-methionine = (3R)-5-guanidino-3-methyl-2-oxopentanoate + S-adenosyl-L-homocysteine + H(+). It functions in the pathway antibiotic biosynthesis. S-adenosyl-L-methionine-dependent methyltransferase involved in the formation of the rare amino acid 3-methylarginine (MeArg), which is incorporated into the peptidyl nucleoside antibiotic arginomycin. Transfers the methyl group from S-adenosyl-L-methionine into 5-guanidino-2-oxopentanoate acid to yield 5-guanidino-3-methyl-2-oxopentanoate, a precursor of MeArg. In Streptomyces arginensis, this protein is 2-ketoarginine methyltransferase.